The following is a 748-amino-acid chain: E3 ubiquitin-protein ligase SMURF2 (748 aa).

A C2 domain is found at 1–119 (MSNPGGRRNG…TGYQRLDLCK (119 aa)). K119 is covalently cross-linked (Glycyl lysine isopeptide (Lys-Gly) (interchain with G-Cter in ubiquitin)). 3 consecutive WW domains span residues 157–190 (NDLPDGWEERRTASGRIQYLNHITRTTQWERPTR), 251–284 (PDLPEGYEQRTTQQGQVYFLHTQTGVSTWHDPRV), and 297–330 (GPLPPGWEIRNTATGRVYFVDHNNRTTQFTDPRL). Positions 414 to 748 (RPKDLWKRLM…IEETCGFAVE (335 aa)) constitute an HECT domain. C716 (glycyl thioester intermediate) is an active-site residue.

Interacts (via WW domains) with SMAD1. Interacts (via WW domains) with SMAD2 (via PY-motif). Interacts (via WW domains) with SMAD3 (via PY-motif). Interacts with SMAD6. Interacts with SMAD7 (via PY-motif) and TGFBR1; SMAD7 recruits SMURF2 to the TGF-beta receptor and regulates its degradation. Does not interact with SMAD4; SMAD4 lacks a PY-motif. Interacts with AIMP1. Interacts with SNON. Interacts with STAMBP and RNF11. May interact with NDFIP1 and NDFIP2; this interaction induces the E3 ubiquitin-protein ligase activity. Interacts with TTC3. In terms of assembly, (Microbial infection) Interacts (via WW domains) with EBOV and MARV VP40 (via PPXY motif); the interaction facilitates VP40 virus-like particle budding. Post-translationally, auto-ubiquitinated and ubiquitinated in the presence of RNF11 and UBE2D1. Ubiquitinated by the SCF(FBXL15) complex and TTC3, leading to its degradation by the proteasome. 'Lys-48'-linked polyubiquitination mediated by TRAF4 at Lys-119 leads to SMURF2 proteasomal degradation. As to expression, widely expressed.

The protein resides in the nucleus. It is found in the cytoplasm. It localises to the cell membrane. Its subcellular location is the membrane raft. It catalyses the reaction S-ubiquitinyl-[E2 ubiquitin-conjugating enzyme]-L-cysteine + [acceptor protein]-L-lysine = [E2 ubiquitin-conjugating enzyme]-L-cysteine + N(6)-ubiquitinyl-[acceptor protein]-L-lysine.. It participates in protein modification; protein ubiquitination. Activated by NDFIP1- and NDFIP2-binding. In terms of biological role, E3 ubiquitin-protein ligase which accepts ubiquitin from an E2 ubiquitin-conjugating enzyme in the form of a thioester and then directly transfers the ubiquitin to targeted substrates. Interacts with SMAD7 to trigger SMAD7-mediated transforming growth factor beta/TGF-beta receptor ubiquitin-dependent degradation, thereby down-regulating TGF-beta signaling. In addition, interaction with SMAD7 activates autocatalytic degradation, which is prevented by interaction with AIMP1. Also forms a stable complex with TGF-beta receptor-mediated phosphorylated SMAD1, SMAD2 and SMAD3, and targets SMAD1 and SMAD2 for ubiquitination and proteasome-mediated degradation. SMAD2 may recruit substrates, such as SNON, for ubiquitin-dependent degradation. Negatively regulates TGFB1-induced epithelial-mesenchymal transition and myofibroblast differentiation. Functionally, (Microbial infection) In case of filoviruses Ebola/EBOV and Marburg/MARV infection, the complex formed by viral matrix protein VP40 and SMURF2 facilitates virus budding. In Homo sapiens (Human), this protein is E3 ubiquitin-protein ligase SMURF2.